The sequence spans 338 residues: uncharacterized protein (338 aa).

Positions 1-29 (MIKQLYKNITICSLTISTALTVFPATSYA) are cleaved as a signal peptide.

Belongs to the aerolysin family.

This is an uncharacterized protein from Staphylococcus aureus (strain bovine RF122 / ET3-1).